We begin with the raw amino-acid sequence, 667 residues long: DNA ligase (667 aa).

Residues 34 to 38 (DAEYD), 83 to 84 (SL), and E113 contribute to the NAD(+) site. K115 (N6-AMP-lysine intermediate) is an active-site residue. NAD(+) contacts are provided by R136, E170, K286, and K310. Zn(2+)-binding residues include C404, C407, C422, and C427. The BRCT domain maps to 589–667 (ATDSVLSGKT…EQQLEDVVGK (79 aa)).

Belongs to the NAD-dependent DNA ligase family. LigA subfamily. Mg(2+) is required as a cofactor. Requires Mn(2+) as cofactor.

It catalyses the reaction NAD(+) + (deoxyribonucleotide)n-3'-hydroxyl + 5'-phospho-(deoxyribonucleotide)m = (deoxyribonucleotide)n+m + AMP + beta-nicotinamide D-nucleotide.. DNA ligase that catalyzes the formation of phosphodiester linkages between 5'-phosphoryl and 3'-hydroxyl groups in double-stranded DNA using NAD as a coenzyme and as the energy source for the reaction. It is essential for DNA replication and repair of damaged DNA. The polypeptide is DNA ligase (Oceanobacillus iheyensis (strain DSM 14371 / CIP 107618 / JCM 11309 / KCTC 3954 / HTE831)).